Consider the following 336-residue polypeptide: Ornithine carbamoyltransferase, catabolic (336 aa).

Carbamoyl phosphate contacts are provided by residues 62 to 65 (STRT), Gln89, Arg113, and 140 to 143 (HPTQ). Residues Asn172, Asp236, and 240-241 (SM) contribute to the L-ornithine site. Residues 277-278 (CL) and Arg322 contribute to the carbamoyl phosphate site.

This sequence belongs to the aspartate/ornithine carbamoyltransferase superfamily. OTCase family.

The protein resides in the cytoplasm. It carries out the reaction carbamoyl phosphate + L-ornithine = L-citrulline + phosphate + H(+). The protein operates within amino-acid degradation; L-arginine degradation via ADI pathway; carbamoyl phosphate from L-arginine: step 2/2. Functionally, reversibly catalyzes the transfer of the carbamoyl group from carbamoyl phosphate (CP) to the N(epsilon) atom of ornithine (ORN) to produce L-citrulline. The chain is Ornithine carbamoyltransferase, catabolic from Staphylococcus aureus (strain MRSA252).